Reading from the N-terminus, the 954-residue chain is Glycine dehydrogenase (decarboxylating) (954 aa).

Lys704 bears the N6-(pyridoxal phosphate)lysine mark.

The protein belongs to the GcvP family. As to quaternary structure, the glycine cleavage system is composed of four proteins: P, T, L and H. Requires pyridoxal 5'-phosphate as cofactor.

The enzyme catalyses N(6)-[(R)-lipoyl]-L-lysyl-[glycine-cleavage complex H protein] + glycine + H(+) = N(6)-[(R)-S(8)-aminomethyldihydrolipoyl]-L-lysyl-[glycine-cleavage complex H protein] + CO2. The glycine cleavage system catalyzes the degradation of glycine. The P protein binds the alpha-amino group of glycine through its pyridoxal phosphate cofactor; CO(2) is released and the remaining methylamine moiety is then transferred to the lipoamide cofactor of the H protein. In Rhizobium meliloti (strain 1021) (Ensifer meliloti), this protein is Glycine dehydrogenase (decarboxylating).